A 154-amino-acid chain; its full sequence is Superoxide dismutase [Cu-Zn] (154 aa).

Residues His47, His49, and His64 each contribute to the Cu cation site. Residues Cys58 and Cys147 are joined by a disulfide bond. The Zn(2+) site is built by His64, His72, His81, and Asp84. Residue His121 coordinates Cu cation. Substrate is bound at residue Arg144.

Belongs to the Cu-Zn superoxide dismutase family. As to quaternary structure, homodimer. Requires Cu cation as cofactor. Zn(2+) is required as a cofactor.

The protein resides in the cytoplasm. The enzyme catalyses 2 superoxide + 2 H(+) = H2O2 + O2. Destroys radicals which are normally produced within the cells and which are toxic to biological systems. This Candida albicans (Yeast) protein is Superoxide dismutase [Cu-Zn] (SOD1).